Here is a 242-residue protein sequence, read N- to C-terminus: Large ribosomal subunit protein uL3 (242 aa).

N5-methylglutamine is present on Gln151.

It belongs to the universal ribosomal protein uL3 family. As to quaternary structure, part of the 50S ribosomal subunit. Forms a cluster with proteins L14 and L19. Methylated by PrmB.

In terms of biological role, one of the primary rRNA binding proteins, it binds directly near the 3'-end of the 23S rRNA, where it nucleates assembly of the 50S subunit. The protein is Large ribosomal subunit protein uL3 of Zymomonas mobilis subsp. mobilis (strain ATCC 31821 / ZM4 / CP4).